The following is a 213-amino-acid chain: Kiwellin (213 aa).

Residues Met1–Ser24 form the signal peptide. 3 cysteine pairs are disulfide-bonded: Cys28–Cys60, Cys32–Cys44, and Cys38–Cys49. Residues Pro65 and Pro67 each carry the 4-hydroxyproline modification. Cystine bridges form between Cys72–Cys90, Cys80–Cys172, Cys119–Cys144, and Cys166–Cys172. The segment at Ser91 to Glu121 is disordered. The span at Pro93–Phe107 shows a compositional bias: polar residues.

The protein belongs to the kiwellin family. In terms of processing, undergoes proteolytic cleavage by actinidin to produce kissper and KiTH. Three forms of KiTH are produced by cleavage at different sites, the main form produced in vivo is KiTH-1.

It is found in the secreted. Functionally, pH-dependent, voltage-gated and anion-selective pore-forming peptide. In Actinidia deliciosa (Kiwi), this protein is Kiwellin.